The chain runs to 576 residues: Proline--tRNA ligase (576 aa).

It belongs to the class-II aminoacyl-tRNA synthetase family. ProS type 1 subfamily. As to quaternary structure, homodimer.

Its subcellular location is the cytoplasm. The catalysed reaction is tRNA(Pro) + L-proline + ATP = L-prolyl-tRNA(Pro) + AMP + diphosphate. Functionally, catalyzes the attachment of proline to tRNA(Pro) in a two-step reaction: proline is first activated by ATP to form Pro-AMP and then transferred to the acceptor end of tRNA(Pro). As ProRS can inadvertently accommodate and process non-cognate amino acids such as alanine and cysteine, to avoid such errors it has two additional distinct editing activities against alanine. One activity is designated as 'pretransfer' editing and involves the tRNA(Pro)-independent hydrolysis of activated Ala-AMP. The other activity is designated 'posttransfer' editing and involves deacylation of mischarged Ala-tRNA(Pro). The misacylated Cys-tRNA(Pro) is not edited by ProRS. This chain is Proline--tRNA ligase, found in Bordetella parapertussis (strain 12822 / ATCC BAA-587 / NCTC 13253).